The chain runs to 71 residues: uncharacterized protein (71 aa).

The segment at 23 to 71 is disordered; it reads ENEKAGQSEEYDDDDKEENKKRRRNNGRRGPPEKKKSRRGGEEQTQRII. Basic and acidic residues predominate over residues 52–71; the sequence is GPPEKKKSRRGGEEQTQRII.

This is an uncharacterized protein from Caenorhabditis elegans.